Here is a 400-residue protein sequence, read N- to C-terminus: Enoyl-[acyl-carrier-protein] reductase [NADH] 2 (400 aa).

Residues 48–53 (GASSGF), 75–76 (FE), 112–113 (DA), and 141–142 (LA) contribute to the NAD(+) site. Tyrosine 227 serves as a coordination point for substrate. The Proton donor role is filled by tyrosine 237. Residues lysine 246 and 275 to 277 (LVT) each bind NAD(+).

Belongs to the TER reductase family. In terms of assembly, monomer.

It carries out the reaction a 2,3-saturated acyl-[ACP] + NAD(+) = a (2E)-enoyl-[ACP] + NADH + H(+). It functions in the pathway lipid metabolism; fatty acid biosynthesis. Its function is as follows. Involved in the final reduction of the elongation cycle of fatty acid synthesis (FAS II). Catalyzes the reduction of a carbon-carbon double bond in an enoyl moiety that is covalently linked to an acyl carrier protein (ACP). The chain is Enoyl-[acyl-carrier-protein] reductase [NADH] 2 from Photobacterium profundum (strain SS9).